Consider the following 391-residue polypeptide: Protein CAJ1 (391 aa).

The J domain occupies 4-73; the sequence is ETEYYDILGI…RSKYDQFGKE (70 aa). The tract at residues 119-161 is disordered; the sequence is KEDEEGTAATETEKADESTDGGMVKHDTNKAESLKKDKLSKEQ. Residues 129-161 are compositionally biased toward basic and acidic residues; the sequence is ETEKADESTDGGMVKHDTNKAESLKKDKLSKEQ. Residue Lys-132 forms a Glycyl lysine isopeptide (Lys-Gly) (interchain with G-Cter in ubiquitin) linkage.

The sequence is that of Protein CAJ1 (CAJ1) from Saccharomyces cerevisiae (strain ATCC 204508 / S288c) (Baker's yeast).